A 337-amino-acid chain; its full sequence is Glucokinase (337 aa).

11–16 (ADIGGT) is a binding site for ATP.

The protein belongs to the bacterial glucokinase family.

It localises to the cytoplasm. It carries out the reaction D-glucose + ATP = D-glucose 6-phosphate + ADP + H(+). The protein is Glucokinase of Xylella fastidiosa (strain M12).